Reading from the N-terminus, the 366-residue chain is L-idonate 5-dehydrogenase (366 aa).

Zn(2+)-binding residues include Cys56, His81, Cys111, Cys114, Cys117, Cys125, and Glu167.

This sequence belongs to the zinc-containing alcohol dehydrogenase family. It depends on Zn(2+) as a cofactor.

It carries out the reaction L-idonate + NAD(+) = 5-dehydro-D-gluconate + NADH + H(+). The protein operates within carbohydrate acid metabolism; L-idonate degradation. Involved in the catabolism of ascorbate to tartrate. The enzyme has no activity with NADP(+). The sequence is that of L-idonate 5-dehydrogenase from Vitis vinifera (Grape).